The following is a 112-amino-acid chain: Putative pterin-4-alpha-carbinolamine dehydratase (112 aa).

It belongs to the pterin-4-alpha-carbinolamine dehydratase family.

It catalyses the reaction (4aS,6R)-4a-hydroxy-L-erythro-5,6,7,8-tetrahydrobiopterin = (6R)-L-erythro-6,7-dihydrobiopterin + H2O. This is Putative pterin-4-alpha-carbinolamine dehydratase from Shewanella oneidensis (strain ATCC 700550 / JCM 31522 / CIP 106686 / LMG 19005 / NCIMB 14063 / MR-1).